A 639-amino-acid polypeptide reads, in one-letter code: Tetracycline resistance protein TetW (639 aa).

Residues 1 to 243 enclose the tr-type G domain; it reads MKIINIGILA…VTGLFQPIGE (243 aa). GTP contacts are provided by residues 10-17, 74-78, and 128-131; these read AHVDAGKT, DTPGH, and NKID.

The protein belongs to the TRAFAC class translation factor GTPase superfamily. Classic translation factor GTPase family. TetM/TetO subfamily.

Its function is as follows. Abolishes the inhibitory effect of tetracyclin on protein synthesis by a non-covalent modification of the ribosomes. This Butyrivibrio fibrisolvens protein is Tetracycline resistance protein TetW (tetW).